Here is a 181-residue protein sequence, read N- to C-terminus: Oligoribonuclease (181 aa).

Positions leucine 8–methionine 171 constitute an Exonuclease domain. Tyrosine 129 is a catalytic residue.

It belongs to the oligoribonuclease family.

It is found in the cytoplasm. In terms of biological role, 3'-to-5' exoribonuclease specific for small oligoribonucleotides. This Chromobacterium violaceum (strain ATCC 12472 / DSM 30191 / JCM 1249 / CCUG 213 / NBRC 12614 / NCIMB 9131 / NCTC 9757 / MK) protein is Oligoribonuclease.